Consider the following 209-residue polypeptide: Thymidylate kinase (209 aa).

10 to 17 (GIDGCGKS) serves as a coordination point for ATP.

This sequence belongs to the thymidylate kinase family.

The catalysed reaction is dTMP + ATP = dTDP + ADP. Phosphorylation of dTMP to form dTDP in both de novo and salvage pathways of dTTP synthesis. This is Thymidylate kinase from Parasynechococcus marenigrum (strain WH8102).